Here is a 74-residue protein sequence, read N- to C-terminus: Large ribosomal subunit protein bL31 (74 aa).

Residues cysteine 16, cysteine 18, cysteine 38, and cysteine 41 each contribute to the Zn(2+) site.

Belongs to the bacterial ribosomal protein bL31 family. Type A subfamily. As to quaternary structure, part of the 50S ribosomal subunit. The cofactor is Zn(2+).

Functionally, binds the 23S rRNA. The protein is Large ribosomal subunit protein bL31 of Streptomyces griseus subsp. griseus (strain JCM 4626 / CBS 651.72 / NBRC 13350 / KCC S-0626 / ISP 5235).